The primary structure comprises 466 residues: Hepatocyte nuclear factor 3-alpha (466 aa).

The fork-head DNA-binding region spans A169 to L260. Positions G251–E288 are essential for DNA binding. A disordered region spans residues E269–S358. Over residues G273–K284 the composition is skewed to gly residues. 2 positions are modified to phosphoserine: S303 and S327. Composition is skewed to low complexity over residues G318–P328 and E344–S358.

In terms of assembly, binds DNA as a monomer. Interacts with FOXA2. Interacts with NKX2-1. Interacts with HDAC7. Interacts with the histone H3-H4 heterodimer. Associates with nucleosomes containing histone H2A. Interacts with AR. Interacts with NR0B2. In terms of tissue distribution, liver.

The protein localises to the nucleus. In terms of biological role, transcription factor that is involved in embryonic development, establishment of tissue-specific gene expression and regulation of gene expression in differentiated tissues. Is thought to act as a 'pioneer' factor opening the compacted chromatin for other proteins through interactions with nucleosomal core histones and thereby replacing linker histones at target enhancer and/or promoter sites. Binds DNA with the consensus sequence 5'-[AC]A[AT]T[AG]TT[GT][AG][CT]T[CT]-3'. Proposed to play a role in translating the epigenetic signatures into cell type-specific enhancer-driven transcriptional programs. Involved in glucose homeostasis; activates the GCG promoter. Involved in the development of multiple endoderm-derived organ systems such as the liver, pancreas, lungs and prostate; FOXA1 and FOXA2 seem to have at least in part redundant roles. Modulates the transcriptional activity of nuclear hormone receptors. Is required for maximal gene activation mediated by AR in the prostate. Negatively regulates AR transactivation via competition with coactivators such as NCOA2. Is involved in ESR1-mediated transcription. Involved in regulation of apoptosis. Involved in cell cycle regulation. Originally described as a transcription activator for a number of liver genes such as AFP, albumin, tyrosine aminotransferase, PEPCK, etc. Interacts with the cis-acting regulatory regions of these genes. The chain is Hepatocyte nuclear factor 3-alpha (Foxa1) from Rattus norvegicus (Rat).